Here is a 238-residue protein sequence, read N- to C-terminus: Serine protease SplA (238 aa).

Positions Met-1–Ala-38 are cleaved as a signal peptide. Catalysis depends on charge relay system residues His-77, Asp-116, and Ser-192.

Belongs to the peptidase S1B family.

It is found in the secreted. This Staphylococcus aureus (strain COL) protein is Serine protease SplA (splA).